The chain runs to 65 residues: Photosystem II reaction center protein J (65 aa).

The helical transmembrane segment at 35–55 (LWLVATAGGTAVIFVLGIFFY) threads the bilayer.

It belongs to the PsbJ family. As to quaternary structure, PSII is composed of 1 copy each of membrane proteins PsbA, PsbB, PsbC, PsbD, PsbE, PsbF, PsbH, PsbI, PsbJ, PsbK, PsbL, PsbM, PsbT, PsbX, PsbY, Psb30/Ycf12, peripheral proteins PsbO, CyanoQ (PsbQ), PsbU, PsbV and a large number of cofactors. It forms dimeric complexes.

The protein resides in the cellular thylakoid membrane. One of the components of the core complex of photosystem II (PSII). PSII is a light-driven water:plastoquinone oxidoreductase that uses light energy to abstract electrons from H(2)O, generating O(2) and a proton gradient subsequently used for ATP formation. It consists of a core antenna complex that captures photons, and an electron transfer chain that converts photonic excitation into a charge separation. The sequence is that of Photosystem II reaction center protein J from Prochlorococcus marinus (strain NATL1A).